The primary structure comprises 949 residues: uncharacterized protein (949 aa).

The region spanning 64 to 170 is the Calponin-homology (CH) domain; the sequence is LCSVHEAKKW…YCLHALSYLL (107 aa).

The protein resides in the nucleus. This is an uncharacterized protein from Schizosaccharomyces pombe (strain 972 / ATCC 24843) (Fission yeast).